Consider the following 219-residue polypeptide: Alpha N-terminal protein methyltransferase 1 (219 aa).

S-adenosyl-L-methionine-binding positions include Gly64, Arg69, Leu111 to Gln112, and Gln127.

It belongs to the methyltransferase superfamily. NTM1 family.

The protein resides in the cytoplasm. It catalyses the reaction N-terminal L-alanyl-L-prolyl-L-lysyl-[protein] + 3 S-adenosyl-L-methionine = N-terminal N,N,N-trimethyl-L-alanyl-L-prolyl-L-lysyl-[protein] + 3 S-adenosyl-L-homocysteine + 3 H(+). The catalysed reaction is N-terminal L-seryl-L-prolyl-L-lysyl-[protein] + 3 S-adenosyl-L-methionine = N-terminal N,N,N-trimethyl-L-seryl-L-prolyl-L-lysyl-[protein] + 3 S-adenosyl-L-homocysteine + 3 H(+). It carries out the reaction N-terminal L-prolyl-L-prolyl-L-lysyl-[protein] + 2 S-adenosyl-L-methionine = N-terminal N,N-dimethyl-L-prolyl-L-prolyl-L-lysyl-[protein] + 2 S-adenosyl-L-homocysteine + 2 H(+). Its function is as follows. Alpha-N-methyltransferase that methylates the N-terminus of target proteins containing the N-terminal motif [Ala/Pro/Ser]-Pro-Lys when the initiator Met is cleaved. Specifically catalyzes mono-, di- or tri-methylation of exposed alpha-amino group of Ala or Ser residue in the [Ala/Ser]-Pro-Lys motif and mono- or di-methylation of Pro in the Pro-Pro-Lys motif. The chain is Alpha N-terminal protein methyltransferase 1 (tae1) from Schizosaccharomyces pombe (strain 972 / ATCC 24843) (Fission yeast).